Consider the following 466-residue polypeptide: MSIQIFNSLSRQKETFVPLEEGKVKMYVCGPTVYNYIHIGNSRPVIVYDTVRRYFQYKGYDVKFVSNFTDVDDKIIKAANELGEEVHELTERFIAAYFEDVTALGCKKADVHPRVTEHMADIIQFIQVLIEKGYAYESAGDVYYRTRKFNGYGKLSHQSVDDLKIGARIEAGEKKDDALDFALWKAAKPGEIFWESPWGNGRPGWHIECSVMAREHLGDTIDIHAGGQDLTFPHHENEIAQSEAHNDKTFARYWMHNGYINIDNEKMSKSLGNFILVNDIRKQIDPQVLRFFMLSVHYRHPINFAKDLVEAASAGLERIRTAYNNVKHRLTTTVSLGDHSDEWLNKITEQKAQFEEAMDDDFNTANGISVLFELARIANIYLNETNTCKKVLETFIETFEVLGDVLGIEFAKEEELLDEEIEALLQERVEARKNRDFARSDEIRDHLQAQGIILEDTRQGTRWKRG.

C29 lines the Zn(2+) pocket. The 'HIGH' region motif lies at 31 to 41; sequence PTVYNYIHIGN. The Zn(2+) site is built by C209, H234, and E238. A 'KMSKS' region motif is present at residues 266–270; sequence KMSKS. K269 is a binding site for ATP.

This sequence belongs to the class-I aminoacyl-tRNA synthetase family. In terms of assembly, monomer. The cofactor is Zn(2+).

The protein resides in the cytoplasm. It catalyses the reaction tRNA(Cys) + L-cysteine + ATP = L-cysteinyl-tRNA(Cys) + AMP + diphosphate. The polypeptide is Cysteine--tRNA ligase (Lysinibacillus sphaericus (strain C3-41)).